Here is a 61-residue protein sequence, read N- to C-terminus: Small ribosomal subunit protein uS14B (61 aa).

Zn(2+) is bound by residues Cys24, Cys27, Cys40, and Cys43.

Belongs to the universal ribosomal protein uS14 family. Zinc-binding uS14 subfamily. Part of the 30S ribosomal subunit. Contacts proteins S3 and S10. It depends on Zn(2+) as a cofactor.

In terms of biological role, binds 16S rRNA, required for the assembly of 30S particles and may also be responsible for determining the conformation of the 16S rRNA at the A site. This is Small ribosomal subunit protein uS14B from Myxococcus xanthus (strain DK1622).